The following is a 62-amino-acid chain: Ranacyclin-T (62 aa).

A signal peptide spans 1–22 (MFTMKKTLLVLFFLGVVSLSLC). A propeptide spanning residues 23 to 43 (VEERDADEEDGGEVMEEEVKR) is cleaved from the precursor. Cysteines 49 and 59 form a disulfide. Lysine amide is present on K60.

The protein belongs to the frog skin active peptide (FSAP) family. Brevinin subfamily. In terms of tissue distribution, expressed by the skin granular glands.

The protein localises to the secreted. Functionally, has antibacterial activity against Gram-positive bacteria B.megaterium Bm11, S.lentus and M.luteus, and Gram-negative bacteria E.coli D22, Y.pseudotuberculosis YP III and P.syringae pv tabaci, and antifungal activity against C.albicans ATCC 10231, C.tropicalis, C.guiller-mondii and P.nicotianae spores. Has weak hemolytic activity. The mature peptide inserts into the hydrophobic core of the bacterial cell membrane and increases permeability without disrupting membrane integrity. Probably binds to the outer membrane surface before aggregating to form transmembrane pores. The chain is Ranacyclin-T (RNCT) from Rana temporaria (European common frog).